The following is a 431-amino-acid chain: 5-methylthioadenosine/S-adenosylhomocysteine deaminase (431 aa).

Positions 61 and 63 each coordinate Zn(2+). Residues Glu-90 and His-183 each coordinate substrate. His-210 lines the Zn(2+) pocket. The substrate site is built by Glu-213 and Asp-298. Asp-298 provides a ligand contact to Zn(2+).

The protein belongs to the metallo-dependent hydrolases superfamily. MTA/SAH deaminase family. Requires Zn(2+) as cofactor.

It catalyses the reaction S-adenosyl-L-homocysteine + H2O + H(+) = S-inosyl-L-homocysteine + NH4(+). The catalysed reaction is S-methyl-5'-thioadenosine + H2O + H(+) = S-methyl-5'-thioinosine + NH4(+). Its function is as follows. Catalyzes the deamination of 5-methylthioadenosine and S-adenosyl-L-homocysteine into 5-methylthioinosine and S-inosyl-L-homocysteine, respectively. Is also able to deaminate adenosine. The protein is 5-methylthioadenosine/S-adenosylhomocysteine deaminase of Halobacterium salinarum (strain ATCC 700922 / JCM 11081 / NRC-1) (Halobacterium halobium).